The primary structure comprises 146 residues: Ribonuclease H (146 aa).

The RNase H type-1 domain occupies 1–142 (MNKIIIYTDG…ADALANLAMD (142 aa)). The Mg(2+) site is built by aspartate 9, glutamate 47, aspartate 70, and aspartate 134.

It belongs to the RNase H family. Monomer. Requires Mg(2+) as cofactor.

The protein localises to the cytoplasm. It catalyses the reaction Endonucleolytic cleavage to 5'-phosphomonoester.. In terms of biological role, endonuclease that specifically degrades the RNA of RNA-DNA hybrids. This chain is Ribonuclease H, found in Ruthia magnifica subsp. Calyptogena magnifica.